We begin with the raw amino-acid sequence, 76 residues long: cAMP-dependent protein kinase inhibitor alpha (76 aa).

An N-acetylthreonine modification is found at threonine 2. The tract at residues 49 to 76 is disordered; that stretch reads KTEGEDDGQRSSTEQSGEAQGEAAKSES.

This sequence belongs to the PKI family. In terms of tissue distribution, present at high levels in skeletal muscle and brain but is present at lower levels in heart, testis and liver.

Its function is as follows. Extremely potent competitive inhibitor of cAMP-dependent protein kinase activity, this protein interacts with the catalytic subunit of the enzyme after the cAMP-induced dissociation of its regulatory chains. This chain is cAMP-dependent protein kinase inhibitor alpha (Pkia), found in Mus musculus (Mouse).